Here is a 240-residue protein sequence, read N- to C-terminus: Large ribosomal subunit protein uL1 (240 aa).

The protein belongs to the universal ribosomal protein uL1 family. Part of the 50S ribosomal subunit.

Its function is as follows. Binds directly to 23S rRNA. The L1 stalk is quite mobile in the ribosome, and is involved in E site tRNA release. Protein L1 is also a translational repressor protein, it controls the translation of the L11 operon by binding to its mRNA. In Streptomyces griseus subsp. griseus (strain JCM 4626 / CBS 651.72 / NBRC 13350 / KCC S-0626 / ISP 5235), this protein is Large ribosomal subunit protein uL1.